We begin with the raw amino-acid sequence, 314 residues long: MAKGIMTYDVGEQVDLHLLIKSSTKGIASNGKPFLTLILQDQSGDIEAKLWDAKQNDEQTYAAQTIVKVVGDIHHYRGRNQLKLRNIRPVAENEQIRIDDFLETAPIPKHDMMDTIMQYIFDMKNPNIQRVTRHLLKKYGQEFADYPAATKNHHEFVSGLAYHVVSMLHLAKSIVDLYPSLDRDLLYSGIILHDLGKVKELSGPVSTTYTVEGNLIGHISIMVTEIAKAAEELGIDSEEILILQHLVLSHHGKGEWGSPKPPMVKEAEILHYIDNLDAKMNMMDRALEHVKPGEYTERIFALENRSFYKPTFHE.

An HD domain is found at 163 to 279; the sequence is HVVSMLHLAK…LHYIDNLDAK (117 aa).

Belongs to the YhaM family.

Shows a 3'-5' exoribonuclease activity. The chain is 3'-5' exoribonuclease YhaM from Bacillus pumilus (strain SAFR-032).